An 888-amino-acid polypeptide reads, in one-letter code: Alanine--tRNA ligase (888 aa).

4 residues coordinate Zn(2+): His564, His568, Cys676, and His680.

Belongs to the class-II aminoacyl-tRNA synthetase family. It depends on Zn(2+) as a cofactor.

Its subcellular location is the cytoplasm. The catalysed reaction is tRNA(Ala) + L-alanine + ATP = L-alanyl-tRNA(Ala) + AMP + diphosphate. Its function is as follows. Catalyzes the attachment of alanine to tRNA(Ala) in a two-step reaction: alanine is first activated by ATP to form Ala-AMP and then transferred to the acceptor end of tRNA(Ala). Also edits incorrectly charged Ser-tRNA(Ala) and Gly-tRNA(Ala) via its editing domain. The protein is Alanine--tRNA ligase of Bartonella tribocorum (strain CIP 105476 / IBS 506).